The primary structure comprises 376 residues: MPIPIIAHIAQFKYEHLITHWAQYTKAAIAVSTIAAFKFWTSGRTTTWERKMNGMVVMVTGGSSGIGQVVVEKLASLGAQVVILLRTEPDQFTVDYIMDLRKRTKNQLIYTEVCDLSSMLSVRKFATKWIDCTPIRRLDMIVLCSGVLLPPFMDRQTTEEGVELQWATNFLGPYQLLRILRPVIYGQPGHREVRIVAATCSSYILGNIDFNDLDLSNHPYPRKSPWKVVGNAKLALMTYLYDFQKKAEAHERPDKMPCNLHTIMANPGVVRTPGFRRVVSFGKVWGLFLYLLLWPFWWLLLKGTIHGAQSFFHAICSPEFASITQPVLVNECSIVEYSRKEITDPEFAEKLIKAADAQIDEVEKQYKKKKIKKSKK.

Residues 1-280 (MPIPIIAHIA…RTPGFRRVVS (280 aa)) lie on the Lumenal side of the membrane. Ile-66, Asp-115, Arg-178, Lys-233, Val-270, and Thr-272 together coordinate NADP(+). The active-site Lowers pKa of active site Tyr is the Lys-233. The chain crosses the membrane as a helical span at residues 281–301 (FGKVWGLFLYLLLWPFWWLLL). At 302-376 (KGTIHGAQSF…KKKKIKKSKK (75 aa)) the chain is on the cytoplasmic side.

It belongs to the short-chain dehydrogenases/reductases (SDR) family.

The protein resides in the cytoplasm. It is found in the endoplasmic reticulum membrane. Its function is as follows. May be involved in lipid metabolism. This is an uncharacterized protein from Schizosaccharomyces pombe (strain 972 / ATCC 24843) (Fission yeast).